The following is a 145-amino-acid chain: D-aminoacyl-tRNA deacylase (145 aa).

A Gly-cisPro motif, important for rejection of L-amino acids motif is present at residues Gly137–Pro138.

The protein belongs to the DTD family. Homodimer.

The protein resides in the cytoplasm. It carries out the reaction glycyl-tRNA(Ala) + H2O = tRNA(Ala) + glycine + H(+). It catalyses the reaction a D-aminoacyl-tRNA + H2O = a tRNA + a D-alpha-amino acid + H(+). In terms of biological role, an aminoacyl-tRNA editing enzyme that deacylates mischarged D-aminoacyl-tRNAs. Also deacylates mischarged glycyl-tRNA(Ala), protecting cells against glycine mischarging by AlaRS. Acts via tRNA-based rather than protein-based catalysis; rejects L-amino acids rather than detecting D-amino acids in the active site. By recycling D-aminoacyl-tRNA to D-amino acids and free tRNA molecules, this enzyme counteracts the toxicity associated with the formation of D-aminoacyl-tRNA entities in vivo and helps enforce protein L-homochirality. This chain is D-aminoacyl-tRNA deacylase, found in Pseudomonas aeruginosa (strain LESB58).